A 283-amino-acid chain; its full sequence is Zinc finger protein 691 (283 aa).

The segment covering 1–41 (MGSEKEQRPEAHLPEEGEGAKPWRVDGSKDSQITPREDHGQ) has biased composition (basic and acidic residues). The tract at residues 1–68 (MGSEKEQRPE…KVTAQAGGPG (68 aa)) is disordered. Serine 43 is subject to Phosphoserine. Lysine 81 participates in a covalent cross-link: Glycyl lysine isopeptide (Lys-Gly) (interchain with G-Cter in SUMO2). 7 consecutive C2H2-type zinc fingers follow at residues 83 to 105 (FICA…QRIH), 111 to 133 (YKCS…ERIH), 139 to 161 (YQCA…QQDH), 167 to 189 (YRCD…HRTH), 195 to 217 (YICC…HRTH), 223 to 245 (YECT…QRTH), and 251 to 273 (YRCT…QKTH).

Belongs to the krueppel C2H2-type zinc-finger protein family.

It localises to the nucleus. In terms of biological role, may be involved in transcriptional regulation. The polypeptide is Zinc finger protein 691 (Znf691) (Mus musculus (Mouse)).